A 185-amino-acid chain; its full sequence is Probable NEDD8-conjugating enzyme Ubc12-like (185 aa).

The segment at 8–29 (KEKQREESQSNNGRGASTVKKQ) is disordered. Over residues 16-28 (QSNNGRGASTVKK) the composition is skewed to polar residues. In terms of domain architecture, UBC core spans 31-176 (AGELRLHKDI…VRRAMMGGQV (146 aa)). C114 acts as the Glycyl thioester intermediate in catalysis.

This sequence belongs to the ubiquitin-conjugating enzyme family. UBC12 subfamily.

Its pathway is protein modification; protein neddylation. Its function is as follows. Accepts the ubiquitin-like protein NEDD8/RUB1 from the ECR1-AXR1 E1 complex and catalyzes its covalent attachment to other proteins. The polypeptide is Probable NEDD8-conjugating enzyme Ubc12-like (RCE2) (Arabidopsis thaliana (Mouse-ear cress)).